Consider the following 125-residue polypeptide: Large ribosomal subunit protein bL12 (125 aa).

Belongs to the bacterial ribosomal protein bL12 family. Homodimer. Part of the ribosomal stalk of the 50S ribosomal subunit. Forms a multimeric L10(L12)X complex, where L10 forms an elongated spine to which 2 to 4 L12 dimers bind in a sequential fashion. Binds GTP-bound translation factors.

In terms of biological role, forms part of the ribosomal stalk which helps the ribosome interact with GTP-bound translation factors. Is thus essential for accurate translation. In Campylobacter jejuni (strain RM1221), this protein is Large ribosomal subunit protein bL12.